The chain runs to 66 residues: UPF0370 protein YpfN (66 aa).

A helical membrane pass occupies residues 4 to 24 (LAKYWWILVIVFLVGVLLNVI). The interval 39–66 (KPELPPHRDFNDKWDDDDDWPKKDQPKK) is disordered. Over residues 42 to 51 (LPPHRDFNDK) the composition is skewed to basic and acidic residues.

This sequence belongs to the UPF0370 family.

The protein resides in the cell membrane. This Escherichia coli O139:H28 (strain E24377A / ETEC) protein is UPF0370 protein YpfN.